Reading from the N-terminus, the 531-residue chain is Phosphoinositide phospholipase C 9 (531 aa).

One can recognise a PI-PLC X-box domain in the interval 107-253 (RDMNAPLSHY…LQNKILISRR (147 aa)). The 121-residue stretch at 265-385 (ENGVELEIQE…GYVKKPNFLL (121 aa)) folds into the PI-PLC Y-box domain. Position 276 is a phosphoserine (Ser-276). The region spanning 386–513 (NAGSSGVFYP…EGIRAVPLYD (128 aa)) is the C2 domain.

Ca(2+) serves as cofactor. Expressed in leaves, roots, flowers and siliques.

It localises to the cell membrane. The enzyme catalyses a 1,2-diacyl-sn-glycero-3-phospho-(1D-myo-inositol-4,5-bisphosphate) + H2O = 1D-myo-inositol 1,4,5-trisphosphate + a 1,2-diacyl-sn-glycerol + H(+). Functionally, the production of the second messenger molecules diacylglycerol (DAG) and inositol 1,4,5-trisphosphate (IP3) is mediated by activated phosphatidylinositol-specific phospholipase C enzymes. The sequence is that of Phosphoinositide phospholipase C 9 (PLC9) from Arabidopsis thaliana (Mouse-ear cress).